We begin with the raw amino-acid sequence, 933 residues long: Valine--tRNA ligase (933 aa).

The short motif at 58 to 68 (PNVTGSLHMGH) is the 'HIGH' region element. Positions 556 to 560 (KMSKS) match the 'KMSKS' region motif. K559 contributes to the ATP binding site. 2 coiled-coil regions span residues 807 to 833 (VTKN…ANKV) and 864 to 933 (EGLV…LGLK).

It belongs to the class-I aminoacyl-tRNA synthetase family. ValS type 1 subfamily. In terms of assembly, monomer.

It is found in the cytoplasm. It catalyses the reaction tRNA(Val) + L-valine + ATP = L-valyl-tRNA(Val) + AMP + diphosphate. Functionally, catalyzes the attachment of valine to tRNA(Val). As ValRS can inadvertently accommodate and process structurally similar amino acids such as threonine, to avoid such errors, it has a 'posttransfer' editing activity that hydrolyzes mischarged Thr-tRNA(Val) in a tRNA-dependent manner. This chain is Valine--tRNA ligase, found in Prochlorococcus marinus (strain SARG / CCMP1375 / SS120).